We begin with the raw amino-acid sequence, 316 residues long: Homoserine O-succinyltransferase (316 aa).

The active-site Acyl-thioester intermediate is the cysteine 142. Substrate contacts are provided by lysine 163 and serine 192. Histidine 235 acts as the Proton acceptor in catalysis. Glutamate 237 is a catalytic residue. Arginine 249 is a binding site for substrate.

This sequence belongs to the MetA family.

It is found in the cytoplasm. It catalyses the reaction L-homoserine + succinyl-CoA = O-succinyl-L-homoserine + CoA. The protein operates within amino-acid biosynthesis; L-methionine biosynthesis via de novo pathway; O-succinyl-L-homoserine from L-homoserine: step 1/1. Its function is as follows. Transfers a succinyl group from succinyl-CoA to L-homoserine, forming succinyl-L-homoserine. In Shewanella amazonensis (strain ATCC BAA-1098 / SB2B), this protein is Homoserine O-succinyltransferase.